The sequence spans 185 residues: Elongation factor P (185 aa).

It belongs to the elongation factor P family.

It localises to the cytoplasm. Its pathway is protein biosynthesis; polypeptide chain elongation. Its function is as follows. Involved in peptide bond synthesis. Stimulates efficient translation and peptide-bond synthesis on native or reconstituted 70S ribosomes in vitro. Probably functions indirectly by altering the affinity of the ribosome for aminoacyl-tRNA, thus increasing their reactivity as acceptors for peptidyl transferase. This is Elongation factor P from Streptococcus pyogenes serotype M5 (strain Manfredo).